We begin with the raw amino-acid sequence, 295 residues long: Acetylglutamate kinase (295 aa).

Substrate contacts are provided by residues 64–65, Arg-86, and Asn-190; that span reads GG.

Belongs to the acetylglutamate kinase family. ArgB subfamily.

It localises to the cytoplasm. It carries out the reaction N-acetyl-L-glutamate + ATP = N-acetyl-L-glutamyl 5-phosphate + ADP. The protein operates within amino-acid biosynthesis; L-arginine biosynthesis; N(2)-acetyl-L-ornithine from L-glutamate: step 2/4. In terms of biological role, catalyzes the ATP-dependent phosphorylation of N-acetyl-L-glutamate. The protein is Acetylglutamate kinase of Pelotomaculum thermopropionicum (strain DSM 13744 / JCM 10971 / SI).